Here is a 72-residue protein sequence, read N- to C-terminus: UPF0352 protein NTHI1007 (72 aa).

It belongs to the UPF0352 family.

This is UPF0352 protein NTHI1007 from Haemophilus influenzae (strain 86-028NP).